Consider the following 340-residue polypeptide: Ferredoxin--NADP reductase (340 aa).

Positions 33, 41, 46, 86, 120, 286, and 327 each coordinate FAD.

It belongs to the ferredoxin--NADP reductase type 2 family. Homodimer. FAD is required as a cofactor.

It catalyses the reaction 2 reduced [2Fe-2S]-[ferredoxin] + NADP(+) + H(+) = 2 oxidized [2Fe-2S]-[ferredoxin] + NADPH. The polypeptide is Ferredoxin--NADP reductase (Rickettsia conorii (strain ATCC VR-613 / Malish 7)).